A 99-amino-acid chain; its full sequence is uncharacterized protein (99 aa).

This is an uncharacterized protein from Saccharomyces cerevisiae (strain ATCC 204508 / S288c) (Baker's yeast).